Consider the following 75-residue polypeptide: Conotoxin Vn5.5 (75 aa).

A signal peptide spans 1–19 (MLCLPVFIILLLLASPAAP). Positions 20-59 (NPLEKRIQSDLIRAALEDADMKTDEREIVNIIDSISDVAK) are excised as a propeptide. Q60 is modified (pyrrolidone carboxylic acid).

This sequence belongs to the conotoxin T superfamily. Post-translationally, contains 2 disulfide bonds that can be either 'C1-C3, C2-C4' or 'C1-C4, C2-C3', since these disulfide connectivities have been observed for conotoxins with cysteine framework V (for examples, see AC P0DQQ7 and AC P81755). As to expression, expressed by the venom duct.

The protein resides in the secreted. The protein is Conotoxin Vn5.5 of Conus ventricosus (Mediterranean cone).